Consider the following 137-residue polypeptide: Large ribosomal subunit protein uL16c (137 aa).

Positions 1–21 (MLSPKRTKFRRHHRGRMKGKA) are disordered.

Belongs to the universal ribosomal protein uL16 family. Part of the 50S ribosomal subunit.

The protein localises to the plastid. It localises to the chloroplast. The polypeptide is Large ribosomal subunit protein uL16c (Tupiella akineta (Green alga)).